A 470-amino-acid polypeptide reads, in one-letter code: Poly(A) polymerase catalytic subunit (470 aa).

Catalysis depends on residues D192 and D194.

The protein belongs to the poxviridae poly(A) polymerase catalytic subunit family. In terms of assembly, heterodimer of a large (catalytic) subunit and a small (regulatory) subunit.

It carries out the reaction RNA(n) + ATP = RNA(n)-3'-adenine ribonucleotide + diphosphate. Polymerase that creates the 3'-poly(A) tail of mRNA's. The chain is Poly(A) polymerase catalytic subunit (PAPL) from Odocoileus hemionus (Mule deer).